The primary structure comprises 179 residues: Large ribosomal subunit protein uL5 (179 aa).

It belongs to the universal ribosomal protein uL5 family. In terms of assembly, part of the 50S ribosomal subunit; part of the 5S rRNA/L5/L18/L25 subcomplex. Contacts the 5S rRNA and the P site tRNA. Forms a bridge to the 30S subunit in the 70S ribosome.

In terms of biological role, this is one of the proteins that bind and probably mediate the attachment of the 5S RNA into the large ribosomal subunit, where it forms part of the central protuberance. In the 70S ribosome it contacts protein S13 of the 30S subunit (bridge B1b), connecting the 2 subunits; this bridge is implicated in subunit movement. Contacts the P site tRNA; the 5S rRNA and some of its associated proteins might help stabilize positioning of ribosome-bound tRNAs. The protein is Large ribosomal subunit protein uL5 of Rickettsia typhi (strain ATCC VR-144 / Wilmington).